The primary structure comprises 102 residues: NADH-quinone oxidoreductase subunit K (102 aa).

3 consecutive transmembrane segments (helical) span residues 5–25 (LGHY…GIFL), 31–51 (IVLL…FVAF), and 62–82 (VFVF…LAIL).

It belongs to the complex I subunit 4L family. NDH-1 is composed of 14 different subunits. Subunits NuoA, H, J, K, L, M, N constitute the membrane sector of the complex.

It is found in the cell inner membrane. It carries out the reaction a quinone + NADH + 5 H(+)(in) = a quinol + NAD(+) + 4 H(+)(out). In terms of biological role, NDH-1 shuttles electrons from NADH, via FMN and iron-sulfur (Fe-S) centers, to quinones in the respiratory chain. The immediate electron acceptor for the enzyme in this species is believed to be ubiquinone. Couples the redox reaction to proton translocation (for every two electrons transferred, four hydrogen ions are translocated across the cytoplasmic membrane), and thus conserves the redox energy in a proton gradient. This is NADH-quinone oxidoreductase subunit K from Methylibium petroleiphilum (strain ATCC BAA-1232 / LMG 22953 / PM1).